The following is a 76-amino-acid chain: Exodeoxyribonuclease 7 small subunit (76 aa).

Belongs to the XseB family. In terms of assembly, heterooligomer composed of large and small subunits.

The protein resides in the cytoplasm. The enzyme catalyses Exonucleolytic cleavage in either 5'- to 3'- or 3'- to 5'-direction to yield nucleoside 5'-phosphates.. In terms of biological role, bidirectionally degrades single-stranded DNA into large acid-insoluble oligonucleotides, which are then degraded further into small acid-soluble oligonucleotides. The polypeptide is Exodeoxyribonuclease 7 small subunit (Staphylococcus aureus (strain Mu3 / ATCC 700698)).